The primary structure comprises 257 residues: Small ribosomal subunit protein uS3 (257 aa).

The KH type-2 domain maps to 40–110 (IRKYLSTKYK…LVSLKVVEVQ (71 aa)). The interval 223–257 (ANKEFSRSSKPKKGSFNRSSRSKNTKPAPKQAVSE) is disordered. Over residues 231-246 (SKPKKGSFNRSSRSKN) the composition is skewed to basic residues.

The protein belongs to the universal ribosomal protein uS3 family. Part of the 30S ribosomal subunit. Forms a tight complex with proteins S10 and S14.

Binds the lower part of the 30S subunit head. Binds mRNA in the 70S ribosome, positioning it for translation. This is Small ribosomal subunit protein uS3 from Ureaplasma parvum serovar 3 (strain ATCC 27815 / 27 / NCTC 11736).